A 173-amino-acid polypeptide reads, in one-letter code: Large ribosomal subunit protein bL9 (173 aa).

This sequence belongs to the bacterial ribosomal protein bL9 family.

Its function is as follows. Binds to the 23S rRNA. This Rickettsia bellii (strain OSU 85-389) protein is Large ribosomal subunit protein bL9.